A 68-amino-acid polypeptide reads, in one-letter code: Conotoxin PnMLKM-011 (68 aa).

The signal sequence occupies residues 1 to 17 (MGVVLFIFLVLFPLATL). A propeptide spanning residues 18-51 (QLDPDQPVERYAENKQLLNPDERRGIILHALGQR) is cleaved from the precursor. Intrachain disulfides connect Cys53–Cys65, Cys54–Cys63, and Cys59–Cys66. Leucine amide is present on Leu67.

Belongs to the conotoxin M superfamily. Expressed by the venom duct.

It localises to the secreted. The polypeptide is Conotoxin PnMLKM-011 (Conus pennaceus (Feathered cone)).